The sequence spans 391 residues: S-adenosylmethionine synthase (391 aa).

Residue H14 coordinates ATP. Residue D16 coordinates Mg(2+). E42 provides a ligand contact to K(+). L-methionine is bound by residues E55 and Q98. A flexible loop region spans residues 98–108; it reads QSVDIAMGVDE. Residues 172-174, 238-239, D247, 253-254, A270, and K274 contribute to the ATP site; these read DGK, RF, and RK. An L-methionine-binding site is contributed by D247. Residue K278 coordinates L-methionine.

The protein belongs to the AdoMet synthase family. As to quaternary structure, homotetramer; dimer of dimers. The cofactor is Mg(2+). K(+) serves as cofactor.

It is found in the cytoplasm. The catalysed reaction is L-methionine + ATP + H2O = S-adenosyl-L-methionine + phosphate + diphosphate. Its pathway is amino-acid biosynthesis; S-adenosyl-L-methionine biosynthesis; S-adenosyl-L-methionine from L-methionine: step 1/1. In terms of biological role, catalyzes the formation of S-adenosylmethionine (AdoMet) from methionine and ATP. The overall synthetic reaction is composed of two sequential steps, AdoMet formation and the subsequent tripolyphosphate hydrolysis which occurs prior to release of AdoMet from the enzyme. The polypeptide is S-adenosylmethionine synthase (Clostridium botulinum (strain Hall / ATCC 3502 / NCTC 13319 / Type A)).